The primary structure comprises 114 residues: Nucleoid-associated protein Amet_4780 (114 aa).

Positions 23-42 (QKMQKDMEKTQAALEEKEVE) are disordered. Positions 25 to 42 (MQKDMEKTQAALEEKEVE) are enriched in basic and acidic residues.

This sequence belongs to the YbaB/EbfC family. Homodimer.

It is found in the cytoplasm. The protein localises to the nucleoid. Functionally, binds to DNA and alters its conformation. May be involved in regulation of gene expression, nucleoid organization and DNA protection. This Alkaliphilus metalliredigens (strain QYMF) protein is Nucleoid-associated protein Amet_4780.